A 220-amino-acid polypeptide reads, in one-letter code: Redox-sensing transcriptional repressor Rex (220 aa).

The segment at residues 16-55 (MYVQVLETLKREGSQVVSSELLARTCSVNPSQIRKDLAYF) is a DNA-binding region (H-T-H motif). 90–95 (GIGNLG) is a binding site for NAD(+).

This sequence belongs to the transcriptional regulatory Rex family. As to quaternary structure, homodimer.

The protein resides in the cytoplasm. Modulates transcription in response to changes in cellular NADH/NAD(+) redox state. The protein is Redox-sensing transcriptional repressor Rex of Solidesulfovibrio magneticus (strain ATCC 700980 / DSM 13731 / RS-1) (Desulfovibrio magneticus).